Consider the following 293-residue polypeptide: Pyridoxal 5'-phosphate synthase subunit PdxS (293 aa).

D23 provides a ligand contact to D-ribose 5-phosphate. Catalysis depends on K80, which acts as the Schiff-base intermediate with D-ribose 5-phosphate. D-ribose 5-phosphate is bound at residue G152. Position 164 (R164) interacts with D-glyceraldehyde 3-phosphate. D-ribose 5-phosphate is bound by residues G213 and 234–235 (GS).

Belongs to the PdxS/SNZ family. In terms of assembly, in the presence of PdxT, forms a dodecamer of heterodimers.

The catalysed reaction is aldehydo-D-ribose 5-phosphate + D-glyceraldehyde 3-phosphate + L-glutamine = pyridoxal 5'-phosphate + L-glutamate + phosphate + 3 H2O + H(+). Its pathway is cofactor biosynthesis; pyridoxal 5'-phosphate biosynthesis. Functionally, catalyzes the formation of pyridoxal 5'-phosphate from ribose 5-phosphate (RBP), glyceraldehyde 3-phosphate (G3P) and ammonia. The ammonia is provided by the PdxT subunit. Can also use ribulose 5-phosphate and dihydroxyacetone phosphate as substrates, resulting from enzyme-catalyzed isomerization of RBP and G3P, respectively. The polypeptide is Pyridoxal 5'-phosphate synthase subunit PdxS (Chloroflexus aggregans (strain MD-66 / DSM 9485)).